The chain runs to 516 residues: Ribonuclease Y (516 aa).

Residues 1 to 21 (MLIKIVIACVITAIIVALIAW) form a helical membrane-spanning segment. The 64-residue stretch at 206-269 (TISVVQLPND…ETARIALEKL (64 aa)) folds into the KH domain. Positions 332–425 (ALKHSIEVAI…VQAADTISAA (94 aa)) constitute an HD domain.

It belongs to the RNase Y family.

It is found in the cell membrane. Its function is as follows. Endoribonuclease that initiates mRNA decay. This is Ribonuclease Y from Lachnoclostridium phytofermentans (strain ATCC 700394 / DSM 18823 / ISDg) (Clostridium phytofermentans).